A 460-amino-acid chain; its full sequence is Interleukin-1 receptor-associated kinase 4 (460 aa).

Position 1 is an N-acetylmethionine (Met1). A Death domain is found at 20–104; it reads RKLSDFIDPQ…APASLLLPDA (85 aa). Residue Lys34 is modified to N6-acetyllysine. The Protein kinase domain occupies 186-454; sequence SVGGNKMGEG…PDIKKVQQLL (269 aa). Residues 192-200 and Lys213 each bind ATP; that span reads MGEGGFGVV. Catalysis depends on Asp311, which acts as the Proton acceptor. Residues 313–316 and Asp329 contribute to the ATP site; that span reads KSAN. A phosphothreonine mark is found at Thr342 and Thr345. Ser346 is modified (phosphoserine).

It belongs to the protein kinase superfamily. TKL Ser/Thr protein kinase family. Pelle subfamily. In terms of assembly, associates with MYD88 and IRAK2 to form a ternary complex called the Myddosome. Once phosphorylated, IRAK4 dissociates from the receptor complex and then associates with the TNF receptor-associated factor 6 (TRAF6), IRAK1, and PELI1; this intermediate complex is required for subsequent NF-kappa-B activation. Direct binding of SMAD6 to PELI1 prevents complex formation and hence negatively regulates IL1R-TLR signaling and eventually NF-kappa-B-mediated gene expression. Interacts with IL1RL1. Interacts (when phosphorylated) with IRAK1. May interact (when phosphorylated) with IRAK3. Mg(2+) is required as a cofactor. Post-translationally, phosphorylated.

The protein localises to the cytoplasm. The catalysed reaction is L-seryl-[protein] + ATP = O-phospho-L-seryl-[protein] + ADP + H(+). The enzyme catalyses L-threonyl-[protein] + ATP = O-phospho-L-threonyl-[protein] + ADP + H(+). In terms of biological role, serine/threonine-protein kinase that plays a critical role in initiating innate immune response against foreign pathogens. Involved in Toll-like receptor (TLR) and IL-1R signaling pathways. Is rapidly recruited by MYD88 to the receptor-signaling complex upon TLR activation to form the Myddosome together with IRAK2. Phosphorylates initially IRAK1, thus stimulating the kinase activity and intensive autophosphorylation of IRAK1. Phosphorylates E3 ubiquitin ligases Pellino proteins (PELI1, PELI2 and PELI3) to promote pellino-mediated polyubiquitination of IRAK1. Then, the ubiquitin-binding domain of IKBKG/NEMO binds to polyubiquitinated IRAK1 bringing together the IRAK1-MAP3K7/TAK1-TRAF6 complex and the NEMO-IKKA-IKKB complex. In turn, MAP3K7/TAK1 activates IKKs (CHUK/IKKA and IKBKB/IKKB) leading to NF-kappa-B nuclear translocation and activation. Alternatively, phosphorylates TIRAP to promote its ubiquitination and subsequent degradation. Phosphorylates NCF1 and regulates NADPH oxidase activation after LPS stimulation suggesting a similar mechanism during microbial infections. This Homo sapiens (Human) protein is Interleukin-1 receptor-associated kinase 4 (IRAK4).